The chain runs to 149 residues: Large ribosomal subunit protein bL9 (149 aa).

This sequence belongs to the bacterial ribosomal protein bL9 family.

In terms of biological role, binds to the 23S rRNA. The sequence is that of Large ribosomal subunit protein bL9 from Alkaliphilus metalliredigens (strain QYMF).